A 156-amino-acid chain; its full sequence is RING finger protein 224 (156 aa).

The RING-type zinc finger occupies 24–71; sequence CIICCSAYDLSGHLPRRLYCGHTFCQACVRRLDTPAPEQRWIPCPQCR.

The polypeptide is RING finger protein 224 (RNF224) (Homo sapiens (Human)).